Consider the following 295-residue polypeptide: 33 kDa chaperonin (295 aa).

Cystine bridges form between Cys-238–Cys-240 and Cys-271–Cys-274.

This sequence belongs to the HSP33 family. Under oxidizing conditions two disulfide bonds are formed involving the reactive cysteines. Under reducing conditions zinc is bound to the reactive cysteines and the protein is inactive.

Its subcellular location is the cytoplasm. Functionally, redox regulated molecular chaperone. Protects both thermally unfolding and oxidatively damaged proteins from irreversible aggregation. Plays an important role in the bacterial defense system toward oxidative stress. The protein is 33 kDa chaperonin of Clostridium botulinum (strain Eklund 17B / Type B).